Here is a 308-residue protein sequence, read N- to C-terminus: N-acetylneuraminate lyase (308 aa).

Aceneuramate is bound by residues Thr50 and Thr51. Tyr142 acts as the Proton donor in catalysis. Lys172 acts as the Schiff-base intermediate with substrate in catalysis. Aceneuramate is bound by residues Ser174, Gly198, Asp200, Glu201, and Ser217.

This sequence belongs to the DapA family. NanA subfamily. Homotetramer.

It is found in the cytoplasm. The enzyme catalyses aceneuramate = aldehydo-N-acetyl-D-mannosamine + pyruvate. Its pathway is amino-sugar metabolism; N-acetylneuraminate degradation. Catalyzes the cleavage of N-acetylneuraminic acid (sialic acid) to form pyruvate and N-acetylmannosamine via a Schiff base intermediate. It prevents sialic acids from being recycled and returning to the cell surface. Involved in the N-glycolylneuraminic acid (Neu5Gc) degradation pathway. In Gallus gallus (Chicken), this protein is N-acetylneuraminate lyase.